Consider the following 507-residue polypeptide: Protein zntA (507 aa).

Residues 1 to 18 (MSIFAYSILAGLAPLLSS) form the signal peptide. Asn-31 is a glycosylation site (N-linked (GlcNAc...) asparagine). Residues 35 to 55 (FHILLCISAGLLFAVASLELI) form a helical membrane-spanning segment. A disordered region spans residues 124–179 (GLNLNNLNQATNLDNNEEDNDNLDNDGENEIENDHDHDHQEDEGGDNDHDHESEEK). Residues 125 to 137 (LNLNNLNQATNLD) are compositionally biased toward low complexity. A compositionally biased stretch (acidic residues) spans 138–154 (NNEEDNDNLDNDGENEI). Positions 155-179 (ENDHDHDHQEDEGGDNDHDHESEEK) are enriched in basic and acidic residues. A helical transmembrane segment spans residues 185-205 (IPMYGIGFGFAILIIVESIFS). The interval 209-264 (GGGGGGGHHSHSHGSLSSSSSNDVISDYISNNNSNNINNNDDDNNNNNNNNDDDDD) is disordered. Residues 221 to 258 (HGSLSSSSSNDVISDYISNNNSNNINNNDDDNNNNNNN) are compositionally biased toward low complexity. 5 N-linked (GlcNAc...) asparagine glycosylation sites follow: Asn-240, Asn-298, Asn-328, Asn-342, and Asn-351. Residues 305–350 (PNIASPVMNKDNNNNDKDKNRNSNKSDIKNSGSINNGNNSGNNNNN) are disordered. Residues 317-332 (NNNDKDKNRNSNKSDI) are compositionally biased toward basic and acidic residues. Residues 333 to 350 (KNSGSINNGNNSGNNNNN) are compositionally biased toward low complexity. The next 5 helical transmembrane spans lie at 355–375 (LTIT…VVIS), 388–408 (VALA…SLIL), 422–442 (FFYF…SSFL), 451–471 (GAFV…TAIL), and 486–506 (LFSI…FHGA).

Belongs to the ZIP transporter (TC 2.A.5) family.

It localises to the membrane. Functionally, may transport divalent cations. May participate, with dstA, in the regulation of the differentiation of stalk cells during development. The protein is Protein zntA (zntA) of Dictyostelium discoideum (Social amoeba).